The chain runs to 122 residues: Flagellar hook-basal body complex protein FliE (122 aa).

It belongs to the FliE family.

Its subcellular location is the bacterial flagellum basal body. This is Flagellar hook-basal body complex protein FliE from Marinobacter nauticus (strain ATCC 700491 / DSM 11845 / VT8) (Marinobacter aquaeolei).